The chain runs to 340 residues: Aldose 1-epimerase (340 aa).

Arg-77 provides a ligand contact to substrate. The active-site Proton donor is the His-172. A substrate-binding site is contributed by Asp-243. Catalysis depends on Glu-305, which acts as the Proton acceptor.

The protein belongs to the aldose epimerase family.

The protein resides in the cytoplasm. The enzyme catalyses alpha-D-glucose = beta-D-glucose. Its pathway is carbohydrate metabolism; hexose metabolism. Its function is as follows. Mutarotase converts alpha-aldose to the beta-anomer. It is active on D-glucose, L-arabinose, D-xylose, D-galactose, maltose and lactose. This is Aldose 1-epimerase (galM) from Haemophilus influenzae (strain ATCC 51907 / DSM 11121 / KW20 / Rd).